The primary structure comprises 560 residues: MSEHSRNSDQEELLDEEINEDEILANLSAEELKELQSEMEVMAPDPSLPVGMIQKDQTDKPPTGNFNHKSLVDYMYWEKASRRMLEEERVPVTFVKSEEKTQEEHEEIEKRNKNMAQYLKEKLNNEIVANKRESKGSSNIQETDEEDEEEEDDDDDDEGEDDGEESEETNREEEGKAKEQIRNCENNCQQVTDKAFKEQRDRPEAQEQSEKKISKLDPKKLALDTSFLKVSTRPSGNQTDLDGSLRRVRKNDPDMKELNLNNIENIPKEMLLDFVNAMKKNKHIKTFSLANVGADENVAFALANMLRENRSITTLNIESNFITGKGIVAIMRCLQFNETLTELRFHNQRHMLGHHAEMEIARLLKANNTLLKMGYHFELPGPRMVVTNLLTRNQDKQRQKRQEEQKQQQLKEQKKLIAMLENGLGLPPGMWELLGGPKPDSRMQEFFQPPPPRPPNPQNVPFSQRSEMMKKPSQAPKYRTDPDSFRVVKLKRIQRKSRMPEAREPPEKTNLKDVIKTLKPVPRNRPPPLVEITPRDQLLNDIRHSSVAYLKPVQLPKELA.

The interaction with tropomyosin alpha stretch occupies residues 1-49; the sequence is MSEHSRNSDQEELLDEEINEDEILANLSAEELKELQSEMEVMAPDPSLP. A coiled-coil region spans residues 16–42; sequence EEINEDEILANLSAEELKELQSEMEVM. 2 disordered regions span residues 45-68 and 127-217; these read DPSL…NFNH and IVAN…SKLD. Acidic residues predominate over residues 142 to 167; that stretch reads ETDEEDEEEEDDDDDDEGEDDGEESE. The span at 168-182 shows a compositional bias: basic and acidic residues; that stretch reads ETNREEEGKAKEQIR. Residues 183–192 show a composition bias toward polar residues; sequence NCENNCQQVT. Basic and acidic residues predominate over residues 194–217; sequence KAFKEQRDRPEAQEQSEKKISKLD. Residues 386-425 adopt a coiled-coil conformation; that stretch reads VTNLLTRNQDKQRQKRQEEQKQQQLKEQKKLIAMLENGLG. Disordered regions lie at residues 437–480 and 494–530; these read PKPD…KYRT and QRKS…PPLV. Residues 448–458 are compositionally biased toward pro residues; that stretch reads QPPPPRPPNPQ. Residues 498 to 516 are compositionally biased toward basic and acidic residues; sequence RMPEAREPPEKTNLKDVIK. The WH2 domain maps to 534–553; sequence PRDQLLNDIRHSSVAYLKPV.

Belongs to the tropomodulin family. In terms of assembly, may interact with tropomyosin alpha (TPM1/2) N-terminus. Interacts with KLHL40; leading to stabilization. In terms of processing, ubiquitinated, leading to its degradation. Interaction with KLHL40 negatively regulates ubiquitination and degradation. In terms of tissue distribution, expressed in cardiac and at higher levels in skeletal muscles (at protein level).

It localises to the cytoplasm. The protein resides in the myofibril. The protein localises to the sarcomere. It is found in the m line. Its subcellular location is the a band. It localises to the cytoskeleton. Essential for the organization of sarcomeric actin thin filaments in skeletal muscle. Increases the rate of actin polymerization. This is Leiomodin-3 (LMOD3) from Homo sapiens (Human).